The following is a 142-amino-acid chain: SLSAKDKANVKAIWGKILPKSDEIGEQALSRMLVVYPQTKAYFSHWASVAPGSAPVKKHGITIMNQIDDCVGHMDDLFGFLTKLSELHATKLRVDPTNFKILAHNLIVVIAAYFPAEFTPEIHLSVDKFLQQLALALAEKYR.

The residue at position 1 (S1) is an N-acetylserine. The 142-residue stretch at 1–142 folds into the Globin domain; it reads SLSAKDKANV…LALALAEKYR (142 aa). Position 59 (H59) interacts with O2. Residue H88 coordinates heme b.

This sequence belongs to the globin family. Heterotetramer of two alpha chains and two beta chains. As to expression, red blood cells.

In terms of biological role, involved in oxygen transport from gills to the various peripheral tissues. The chain is Hemoglobin subunit alpha-4 (hba4) from Oncorhynchus mykiss (Rainbow trout).